A 190-amino-acid polypeptide reads, in one-letter code: Elongation factor P 2 (190 aa).

The protein belongs to the elongation factor P family.

The protein localises to the cytoplasm. It functions in the pathway protein biosynthesis; polypeptide chain elongation. Its function is as follows. Involved in peptide bond synthesis. Stimulates efficient translation and peptide-bond synthesis on native or reconstituted 70S ribosomes in vitro. Probably functions indirectly by altering the affinity of the ribosome for aminoacyl-tRNA, thus increasing their reactivity as acceptors for peptidyl transferase. This Chlamydia caviae (strain ATCC VR-813 / DSM 19441 / 03DC25 / GPIC) (Chlamydophila caviae) protein is Elongation factor P 2 (efp2).